A 297-amino-acid chain; its full sequence is Homoserine kinase (297 aa).

Residue 82–92 coordinates ATP; the sequence is PLTRGLGSSAS.

Belongs to the GHMP kinase family. Homoserine kinase subfamily.

The protein localises to the cytoplasm. The enzyme catalyses L-homoserine + ATP = O-phospho-L-homoserine + ADP + H(+). Its pathway is amino-acid biosynthesis; L-threonine biosynthesis; L-threonine from L-aspartate: step 4/5. Its function is as follows. Catalyzes the ATP-dependent phosphorylation of L-homoserine to L-homoserine phosphate. This chain is Homoserine kinase, found in Bacillus thuringiensis subsp. konkukian (strain 97-27).